Here is a 308-residue protein sequence, read N- to C-terminus: Dipeptide transport system permease protein DppB (308 aa).

7 consecutive transmembrane segments (helical) span residues 10-30 (WAMA…MKVI), 59-79 (LIFQ…GPSI), 100-120 (LGMT…VIAA), 131-151 (AMSL…TLLI), 168-188 (SPIH…AIIA), 228-248 (MPVI…SFVI), and 278-298 (VFYS…YGLL). The 202-residue stretch at 94-295 (FPVSFELGMT…IMLFLVDLAY (202 aa)) folds into the ABC transmembrane type-1 domain.

This sequence belongs to the binding-protein-dependent transport system permease family. OppBC subfamily.

It is found in the cell membrane. Probably part of the ABC transporter DppBCDE involved in dipeptide transport. Responsible for the translocation of the substrate across the membrane. The polypeptide is Dipeptide transport system permease protein DppB (dppB) (Bacillus subtilis (strain 168)).